Reading from the N-terminus, the 834-residue chain is Leucine--tRNA ligase (834 aa).

Residues 36–46 (PYPSGKIHVGH) carry the 'HIGH' region motif. Residues 602–606 (KMSKS) carry the 'KMSKS' region motif. Lysine 605 lines the ATP pocket.

This sequence belongs to the class-I aminoacyl-tRNA synthetase family.

It is found in the cytoplasm. It carries out the reaction tRNA(Leu) + L-leucine + ATP = L-leucyl-tRNA(Leu) + AMP + diphosphate. The chain is Leucine--tRNA ligase from Rickettsia canadensis (strain McKiel).